Here is an 878-residue protein sequence, read N- to C-terminus: Interleukin-3 receptor class 2 subunit beta (878 aa).

Positions 1–22 are cleaved as a signal peptide; it reads MDQQMALTWGLCYMALVALCWG. The Extracellular segment spans residues 23–440; that stretch reads HEVTEEEETV…SNEYTWTTDW (418 aa). An intrachain disulfide couples Cys-39 to Cys-49. The N-linked (GlcNAc...) asparagine glycan is linked to Asn-62. An intrachain disulfide couples Cys-78 to Cys-95. A Fibronectin type-III 1 domain is found at 139-244; sequence PPKDIHISPS…PEVHWDSQPG (106 aa). The interval 223 to 244 is disordered; that stretch reads GSSLSGRPSRWSPEVHWDSQPG. 2 disulfides stabilise this stretch: Cys-254–Cys-264 and Cys-293–Cys-310. In terms of domain architecture, Fibronectin type-III 2 spans 343 to 438; the sequence is QMEPPILNQT…EWSNEYTWTT (96 aa). An N-linked (GlcNAc...) asparagine glycan is attached at Asn-350. The WSXWS motif motif lies at 427-431; sequence WSEWS. A helical membrane pass occupies residues 441–462; the sequence is VMPTLWIVLILVFLIFTLLLAL. At 463–878 the chain is on the cytoplasmic side; that stretch reads HFGRVYGYRT…AIQFFKSLKY (416 aa). Positions 476 to 484 match the Box 1 motif motif; it reads WKEKIPNPS. 2 disordered regions span residues 539–620 and 660–709; these read LTIE…GGSL and SSLE…MASD. The segment covering 554-570 has biased composition (polar residues); sequence PDTTPAASSESTEQLPN. Residues 671 to 689 are compositionally biased toward basic and acidic residues; the sequence is EPKENPPVELSVEKQEARD. Ser-752 and Ser-754 each carry phosphoserine. Residue Tyr-765 is modified to Phosphotyrosine. 2 disordered regions span residues 771–810 and 829–849; these read SVSQ…PHPE and PGSL…ETED.

The protein belongs to the type I cytokine receptor family. Type 4 subfamily. In terms of assembly, heterodimer of an alpha and a beta subunit.

The protein localises to the membrane. Its function is as follows. In mouse, there are two classes of high-affinity IL3 receptors. One contains this IL3-specific beta subunit and the other contains the beta subunit also shared by high-affinity IL5 and GM-CSF receptors. The polypeptide is Interleukin-3 receptor class 2 subunit beta (Csf2rb2) (Mus musculus (Mouse)).